Consider the following 198-residue polypeptide: Pyridoxal 5'-phosphate synthase subunit PdxT (198 aa).

Residue 49-51 (GES) participates in L-glutamine binding. Residue C81 is the Nucleophile of the active site. L-glutamine contacts are provided by residues R113 and 141-142 (IR). Active-site charge relay system residues include H177 and E179.

It belongs to the glutaminase PdxT/SNO family. As to quaternary structure, in the presence of PdxS, forms a dodecamer of heterodimers. Only shows activity in the heterodimer.

It carries out the reaction aldehydo-D-ribose 5-phosphate + D-glyceraldehyde 3-phosphate + L-glutamine = pyridoxal 5'-phosphate + L-glutamate + phosphate + 3 H2O + H(+). The enzyme catalyses L-glutamine + H2O = L-glutamate + NH4(+). It functions in the pathway cofactor biosynthesis; pyridoxal 5'-phosphate biosynthesis. Catalyzes the hydrolysis of glutamine to glutamate and ammonia as part of the biosynthesis of pyridoxal 5'-phosphate. The resulting ammonia molecule is channeled to the active site of PdxS. The polypeptide is Pyridoxal 5'-phosphate synthase subunit PdxT (Mycobacterium ulcerans (strain Agy99)).